Here is a 361-residue protein sequence, read N- to C-terminus: 3-dehydroquinate synthase (361 aa).

NAD(+) is bound by residues G105–D109, T129–T130, K142, K151, and F169–T172. Zn(2+) is bound by residues E184, H247, and H264.

It belongs to the sugar phosphate cyclases superfamily. Dehydroquinate synthase family. The cofactor is Co(2+). Zn(2+) is required as a cofactor. It depends on NAD(+) as a cofactor.

The protein localises to the cytoplasm. It catalyses the reaction 7-phospho-2-dehydro-3-deoxy-D-arabino-heptonate = 3-dehydroquinate + phosphate. Its pathway is metabolic intermediate biosynthesis; chorismate biosynthesis; chorismate from D-erythrose 4-phosphate and phosphoenolpyruvate: step 2/7. Its function is as follows. Catalyzes the conversion of 3-deoxy-D-arabino-heptulosonate 7-phosphate (DAHP) to dehydroquinate (DHQ). This chain is 3-dehydroquinate synthase, found in Endomicrobium trichonymphae.